A 542-amino-acid polypeptide reads, in one-letter code: CTP synthase (542 aa).

Positions 1-265 are amidoligase domain; that stretch reads MTKYIFVTGG…LKPISKELSL (265 aa). A CTP-binding site is contributed by Ser-13. Ser-13 contacts UTP. ATP contacts are provided by residues 14 to 19 and Asp-71; that span reads SLGKGI. 2 residues coordinate Mg(2+): Asp-71 and Glu-139. Residues 146–148, 186–191, and Lys-222 each bind CTP; these read DIE and KSKPTQ. UTP-binding positions include 186-191 and Lys-222; that span reads KSKPTQ. A Glutamine amidotransferase type-1 domain is found at 290–541; that stretch reads VLGFVGKYLE…VEATLAISQE (252 aa). Gly-352 serves as a coordination point for L-glutamine. Cys-379 (nucleophile; for glutamine hydrolysis) is an active-site residue. Residues 380–383, Glu-403, and Arg-471 each bind L-glutamine; that span reads LGMQ. Active-site residues include His-514 and Glu-516.

This sequence belongs to the CTP synthase family. As to quaternary structure, homotetramer.

It carries out the reaction UTP + L-glutamine + ATP + H2O = CTP + L-glutamate + ADP + phosphate + 2 H(+). The enzyme catalyses L-glutamine + H2O = L-glutamate + NH4(+). The catalysed reaction is UTP + NH4(+) + ATP = CTP + ADP + phosphate + 2 H(+). The protein operates within pyrimidine metabolism; CTP biosynthesis via de novo pathway; CTP from UDP: step 2/2. Allosterically activated by GTP, when glutamine is the substrate; GTP has no effect on the reaction when ammonia is the substrate. The allosteric effector GTP functions by stabilizing the protein conformation that binds the tetrahedral intermediate(s) formed during glutamine hydrolysis. Inhibited by the product CTP, via allosteric rather than competitive inhibition. Catalyzes the ATP-dependent amination of UTP to CTP with either L-glutamine or ammonia as the source of nitrogen. Regulates intracellular CTP levels through interactions with the four ribonucleotide triphosphates. This is CTP synthase from Sulfurimonas denitrificans (strain ATCC 33889 / DSM 1251) (Thiomicrospira denitrificans (strain ATCC 33889 / DSM 1251)).